A 578-amino-acid polypeptide reads, in one-letter code: tRNA (guanine(26)-N(2))-dimethyltransferase (578 aa).

The 434-residue stretch at 18 to 451 folds into the Trm1 methyltransferase domain; the sequence is NVIRERNAEI…APPAVLWDIL (434 aa). Arg-43 provides a ligand contact to S-adenosyl-L-methionine. Positions 63–92 are disordered; that stretch reads EKALKKQRKKVKEQEDEKTTPVPEDPPVYE. The S-adenosyl-L-methionine site is built by Arg-113 and Asp-131. 4 residues coordinate Zn(2+): Cys-295, Cys-298, Cys-335, and Cys-338. The segment at 491–578 is disordered; the sequence is EANPKSRKSA…PKQPKLEATA (88 aa). Positions 564–578 are enriched in basic and acidic residues; it reads DVEHLPKQPKLEATA.

It belongs to the class I-like SAM-binding methyltransferase superfamily. Trm1 family.

It carries out the reaction guanosine(26) in tRNA + 2 S-adenosyl-L-methionine = N(2)-dimethylguanosine(26) in tRNA + 2 S-adenosyl-L-homocysteine + 2 H(+). In terms of biological role, dimethylates a single guanine residue at position 26 of most tRNAs using S-adenosyl-L-methionine as donor of the methyl groups. The polypeptide is tRNA (guanine(26)-N(2))-dimethyltransferase (Drosophila melanogaster (Fruit fly)).